Consider the following 571-residue polypeptide: Peptide-N4-(N-acetyl-beta-glucosaminyl)asparagine amidase A (571 aa).

Residues asparagine 121, asparagine 143, asparagine 197, asparagine 241, asparagine 318, asparagine 367, asparagine 390, asparagine 423, asparagine 457, asparagine 481, asparagine 524, and asparagine 529 are each glycosylated (N-linked (GlcNAc...) asparagine).

As to quaternary structure, heterodimer of a large and a small chain. Post-translationally, is highly glycosylated and is largly resistant against self-deglycosylation.

It carries out the reaction Hydrolysis of an N(4)-(acetyl-beta-D-glucosaminyl)asparagine residue in which the glucosamine residue may be further glycosylated, to yield a (substituted) N-acetyl-beta-D-glucosaminylamine and a peptide containing an aspartate residue.. This Prunus dulcis (Almond) protein is Peptide-N4-(N-acetyl-beta-glucosaminyl)asparagine amidase A.